The primary structure comprises 252 residues: tRNA-cytidine(32) 2-sulfurtransferase (252 aa).

The PP-loop motif signature appears at 37–42 (SGGKDS). [4Fe-4S] cluster is bound by residues cysteine 112, cysteine 115, and cysteine 202.

Belongs to the TtcA family. Homodimer. Mg(2+) serves as cofactor. The cofactor is [4Fe-4S] cluster.

The protein resides in the cytoplasm. The enzyme catalyses cytidine(32) in tRNA + S-sulfanyl-L-cysteinyl-[cysteine desulfurase] + AH2 + ATP = 2-thiocytidine(32) in tRNA + L-cysteinyl-[cysteine desulfurase] + A + AMP + diphosphate + H(+). It participates in tRNA modification. Functionally, catalyzes the ATP-dependent 2-thiolation of cytidine in position 32 of tRNA, to form 2-thiocytidine (s(2)C32). The sulfur atoms are provided by the cysteine/cysteine desulfurase (IscS) system. The protein is tRNA-cytidine(32) 2-sulfurtransferase of Geotalea uraniireducens (strain Rf4) (Geobacter uraniireducens).